Consider the following 502-residue polypeptide: Glucose-6-phosphate isomerase (502 aa).

Glu331 serves as the catalytic Proton donor. Residues His362 and Lys471 contribute to the active site.

Belongs to the GPI family.

The protein resides in the cytoplasm. The enzyme catalyses alpha-D-glucose 6-phosphate = beta-D-fructose 6-phosphate. The protein operates within carbohydrate biosynthesis; gluconeogenesis. It functions in the pathway carbohydrate degradation; glycolysis; D-glyceraldehyde 3-phosphate and glycerone phosphate from D-glucose: step 2/4. Functionally, catalyzes the reversible isomerization of glucose-6-phosphate to fructose-6-phosphate. The sequence is that of Glucose-6-phosphate isomerase from Xylella fastidiosa (strain 9a5c).